A 318-amino-acid chain; its full sequence is Deoxyhypusine hydroxylase (318 aa).

2 HEAT-like PBS-type repeats span residues 70 to 96 (LKHE…VLEN) and 103 to 129 (VRHE…YFKE). H72, E73, H105, E106, H231, E232, H264, and E265 together coordinate Fe cation. An HEAT-like PBS-type 3 repeat occupies 262 to 288 (VRHEAAEALGSIATDECLPVLQSFLND).

It belongs to the deoxyhypusine hydroxylase family. Fe(2+) is required as a cofactor.

It is found in the cytoplasm. It localises to the nucleus. It catalyses the reaction [eIF5A protein]-deoxyhypusine + AH2 + O2 = [eIF5A protein]-hypusine + A + H2O. It participates in protein modification; eIF5A hypusination. Catalyzes the hydroxylation of the N(6)-(4-aminobutyl)-L-lysine intermediate to form hypusine, an essential post-translational modification only found in mature eIF-5A factor. The polypeptide is Deoxyhypusine hydroxylase (Candida albicans (strain SC5314 / ATCC MYA-2876) (Yeast)).